The following is a 350-amino-acid chain: Calcium uniporter protein, mitochondrial (350 aa).

Residues 1–49 (MAAAAGRSLLLLLCSRGGGGGAGGCGALTAGCFPGLGVSRHRPHQQHRT) constitute a mitochondrion transit peptide. The Mitochondrial matrix portion of the chain corresponds to 50 to 232 (AHQRPASWQS…ISRKAEKRTT (183 aa)). 2 positions are modified to phosphoserine; by CaMK2: serine 56 and serine 91. Residues 74-164 (VTVVYQNGLP…LTYHVRPPKR (91 aa)) form an N-terminal MCU domain region. An S-glutathionyl cysteine modification is found at cysteine 96. Positions 191–220 (IEQHQLNKERELVERLEDLKQQLAPLEKVR) form a coiled coil. A helical transmembrane segment spans residues 233–256 (LVLWGGLAYMATQFGILARLTWWE). Over 257–264 (YSWDIMEP) the chain is Mitochondrial intermembrane. Positions 259 to 267 (WDIMEPVTY) match the Selectivity filter motif. Residue glutamate 263 participates in Ca(2+) binding. The helical transmembrane segment at 265–282 (VTYFITYGSAMAMYAYFV) threads the bilayer. Over 283 to 350 (MTRQEYVYPE…LPLRQIGEKE (68 aa)) the chain is Mitochondrial matrix. Residues 284-289 (TRQEYV) are juxtamembrane helix. A coiled-coil region spans residues 310-338 (RFDLEKYNQLKDAIAQAEMDLKRLRDPLQ). Residue lysine 331 is modified to N6-acetyllysine.

The protein belongs to the MCU (TC 1.A.77) family. As to quaternary structure, homotetramer. Component of the uniplex complex, composed of MCU, EMRE/SMDT1, MICU1 and MICU2 (or MICU3) in a 4:4:1:1 stoichiometry. Interacts with CCDC109B/MCUB; this inhibits channel activity. Interacts with MCUR1. Interactions with MICU1 and MCUR1 are mutually exclusive. Interacts with SLC25A23. Post-translationally, phosphorylation by CaMK2 in heart leads to increased MCU current. The regulation of MCU by CaMK2 is however subject to discussion: another group was unable to reproduce these results. Phosphorylated on tyrosines by PTK2B/PYK2, promoting oligomerization. Glutathionylation at Cys-96 in response to reactive oxygen species (ROS) promotes MCU higher-order assembly, leading to constitutive activation of the MCU channel and mitochondrial calcium overload. In terms of processing, undergoes proteolytic degradation by SPG7. In terms of tissue distribution, detected in heart muscle (at protein level). Expressed in skeletal muscle, heart, kidney, liver, brain, lung, white fat and spleen.

It localises to the mitochondrion inner membrane. It catalyses the reaction Ca(2+)(in) = Ca(2+)(out). With respect to regulation, MCU channel activity is regulated by the heterodimer composed of MICU1 and either MICU2 or MICU3, which act as calcium-sensors. At low calcium levels, MICU1 occludes the pore of the MCU channel, preventing mitochondrial calcium uptake. At higher calcium levels, calcium-binding to MICU1 and MICU2 (or MICU3) induces a conformational change that weakens MCU-MICU1 interactions and moves the MICU1-MICU2 heterodimer away from the pore, allowing calcium permeation through the channel. MCU channel activity is gated by EMRE/SMDT1 via the juxtamembrane helix loop. Inhibited by ruthenium red or its derivative Ru360. Its function is as follows. Channel-forming and calcium-conducting subunit of the mitochondrial inner membrane calcium uniporter complex (uniplex), which mediates calcium uptake into the mitochondrial matrix. MCU channel activity is regulated by the calcium-sensor subunits of the uniplex MICU1 and MICU2 (or MICU3). Mitochondrial calcium homeostasis plays key roles in cellular physiology and regulates ATP production, cytoplasmic calcium signals and activation of cell death pathways. Involved in buffering the amplitude of systolic calcium rises in cardiomyocytes. While dispensable for baseline homeostatic cardiac function, acts as a key regulator of short-term mitochondrial calcium loading underlying a 'fight-or-flight' response during acute stress: acts by mediating a rapid increase of mitochondrial calcium in pacemaker cells. Participates in mitochondrial permeability transition during ischemia-reperfusion injury. Mitochondrial calcium uptake in skeletal muscle cells is involved in muscle size in adults. Regulates synaptic vesicle endocytosis kinetics in central nerve terminal. Regulates glucose-dependent insulin secretion in pancreatic beta-cells by regulating mitochondrial calcium uptake. Involved in antigen processing and presentation. This chain is Calcium uniporter protein, mitochondrial, found in Mus musculus (Mouse).